Here is a 350-residue protein sequence, read N- to C-terminus: 3-isopropylmalate dehydrogenase (350 aa).

Residue 76-87 (GPKWDNAPKRPE) coordinates NAD(+). Residues arginine 94, arginine 104, arginine 132, and aspartate 217 each coordinate substrate. Aspartate 217, aspartate 241, and aspartate 245 together coordinate Mg(2+). Position 275–287 (275–287 (GSAPDIANQNIAN)) interacts with NAD(+).

Belongs to the isocitrate and isopropylmalate dehydrogenases family. LeuB type 1 subfamily. As to quaternary structure, homodimer. The cofactor is Mg(2+). Requires Mn(2+) as cofactor.

It is found in the cytoplasm. The catalysed reaction is (2R,3S)-3-isopropylmalate + NAD(+) = 4-methyl-2-oxopentanoate + CO2 + NADH. The protein operates within amino-acid biosynthesis; L-leucine biosynthesis; L-leucine from 3-methyl-2-oxobutanoate: step 3/4. In terms of biological role, catalyzes the oxidation of 3-carboxy-2-hydroxy-4-methylpentanoate (3-isopropylmalate) to 3-carboxy-4-methyl-2-oxopentanoate. The product decarboxylates to 4-methyl-2 oxopentanoate. The polypeptide is 3-isopropylmalate dehydrogenase (Listeria monocytogenes serovar 1/2a (strain ATCC BAA-679 / EGD-e)).